A 229-amino-acid polypeptide reads, in one-letter code: MTDMNKWRHIFKLDPAKPISDEDLMKICTSDTDAIMIGGTDDITEENVAHLMHKVKCYSLPIVLEISNLESVVPGFDLYFIPTVLNSRDVKYHNGLLLEALKSYGTLIDFNEVVFEGYVVLNPDCKVAKLTQADTMIDDEDIEAYAQMINDMYQLPVMYIEYSGVYGETNLVKAAADMLTETQLFYGGGISNYEEAEMMASIADTIIVGNIIYEDINKALKTVKVKETH.

K12 lines the sn-glycerol 1-phosphate pocket. D14 and T40 together coordinate Mg(2+). Sn-glycerol 1-phosphate is bound by residues 159-164, G189, and 209-210; these read YIEYSG and GN.

It belongs to the GGGP/HepGP synthase family. Group I subfamily. As to quaternary structure, homodimer. It depends on Mg(2+) as a cofactor.

It catalyses the reaction sn-glycerol 1-phosphate + all-trans-heptaprenyl diphosphate = 3-heptaprenyl-sn-glycero-1-phosphate + diphosphate. Its pathway is membrane lipid metabolism; glycerophospholipid metabolism. Prenyltransferase that catalyzes in vivo the transfer of the heptaprenyl moiety of heptaprenyl pyrophosphate (HepPP; 35 carbon atoms) to the C3 hydroxyl of sn-glycerol-1-phosphate (G1P), producing heptaprenylglyceryl phosphate (HepGP). This reaction is an ether-bond-formation step in the biosynthesis of archaea-type G1P-based membrane lipids found in Bacillales. This chain is Heptaprenylglyceryl phosphate synthase, found in Staphylococcus saprophyticus subsp. saprophyticus (strain ATCC 15305 / DSM 20229 / NCIMB 8711 / NCTC 7292 / S-41).